Reading from the N-terminus, the 246-residue chain is Fasciclin-like arabinogalactan protein 11 (246 aa).

Positions 1-24 (MATSRTFIFSNLFIFFLVIATTYG) are cleaved as a signal peptide. The region spanning 34 to 179 (PTNITAILEK…LAVYQVDQVL (146 aa)) is the FAS1 domain. Residues Asn36, Asn68, Asn141, and Asn150 are each glycosylated (N-linked (GlcNAc...) asparagine). Residues 193-222 (PAPEKGGSVSKGSASGGDDGGDSTDSSDAE) are disordered. A lipid anchor (GPI-anchor amidated serine) is attached at Ser219. A propeptide spans 220 to 246 (DAERTGFGFGIRITTVAAIAASSSLWI) (removed in mature form).

This sequence belongs to the fasciclin-like AGP family. Expressed in the sclerenchyma cells of inflorescence stems and siliques.

Its subcellular location is the cell membrane. In terms of biological role, may be a cell surface adhesion protein. The protein is Fasciclin-like arabinogalactan protein 11 (FLA11) of Arabidopsis thaliana (Mouse-ear cress).